The chain runs to 229 residues: E3 ubiquitin-protein ligase RNF114 (229 aa).

The interval 1 to 23 (MAAAQPESRDGAAQSAKPASETD) is disordered. Residues 30–69 (CPVCLEVFEKPVQVPCGHVFCSACLQECLKPKKPVCGVCR) form an RING-type zinc finger. Residues C92 and C95 each coordinate Zn(2+). The C2HC RNF-type zinc finger occupies 92 to 111 (CHGCRKNFILSKIRAHVTSC). K103 carries the N6-acetyllysine modification. 2 residues coordinate Zn(2+): H107 and C111. K113 is modified (N6-acetyllysine).

Interacts with XAF1, the interaction increases XAF1 stability and proapoptotic effects, and may regulate IFN signaling. Post-translationally, autoubiquitinated. Polyubiquitinated in the presence of E2 enzymes UBE2D1, UBE2D2 and UBE2D3, but only monoubiquitinated in the presence of UBE2E1.

The protein resides in the cytoplasm. The protein localises to the nucleus. The catalysed reaction is S-ubiquitinyl-[E2 ubiquitin-conjugating enzyme]-L-cysteine + [acceptor protein]-L-lysine = [E2 ubiquitin-conjugating enzyme]-L-cysteine + N(6)-ubiquitinyl-[acceptor protein]-L-lysine.. It functions in the pathway protein modification; protein ubiquitination. E3 ubiquitin-protein ligase that promotes the ubiquitination of various substrates. In turn, participates in the regulation of many biological processes including cell cycle, apoptosis, osteoclastogenesis as well as innate or adaptive immunity. Acts as negative regulator of NF-kappa-B-dependent transcription by promoting the ubiquitination and stabilization of the NF-kappa-B inhibitor TNFAIP3. May promote the ubiquitination of TRAF6 as well. Also acts as a negative regulator of T-cell activation. Inhibits cellular dsRNA responses and interferon production by targeting MAVS component for proteasomal degradation. Ubiquitinates the CDK inhibitor CDKN1A leading to its degradationand probably also CDKN1B and CDKN1C. This activity stimulates cell cycle G1-to-S phase transition and suppresses cellular senescence. May play a role in spermatogenesis. This is E3 ubiquitin-protein ligase RNF114 (Rnf114) from Mus musculus (Mouse).